Reading from the N-terminus, the 265-residue chain is Glutamate racemase (265 aa).

Residues 12-13 and 44-45 contribute to the substrate site; these read DS and YG. The active-site Proton donor/acceptor is the C75. Residue 76-77 coordinates substrate; it reads NT. The active-site Proton donor/acceptor is C186. 187 to 188 is a binding site for substrate; it reads TH.

The protein belongs to the aspartate/glutamate racemases family.

The catalysed reaction is L-glutamate = D-glutamate. The protein operates within cell wall biogenesis; peptidoglycan biosynthesis. In terms of biological role, provides the (R)-glutamate required for cell wall biosynthesis. This chain is Glutamate racemase, found in Pseudomonas paraeruginosa (strain DSM 24068 / PA7) (Pseudomonas aeruginosa (strain PA7)).